Here is a 306-residue protein sequence, read N- to C-terminus: Aquaporin-1 (306 aa).

The segment covering 1 to 23 (MASTHSSLTTVQNNANNKSNRTL) has biased composition (polar residues). Positions 1 to 24 (MASTHSSLTTVQNNANNKSNRTLN) are disordered. At 1-59 (MASTHSSLTTVQNNANNKSNRTLNTERRLSMESSVFTLYNKAADELDTSQRSAFQACHR) the chain is on the cytoplasmic side. The chain crosses the membrane as a helical span at residues 60-80 (EFLAEFIGTVILVLLTCGFCA). The Extracellular portion of the chain corresponds to 81-92 (EQTLHIEESKSW). The helical transmembrane segment at 93–113 (LTSSFGSGLSVLIGICVSGHV) threads the bilayer. At 114 to 145 (SGAHLNPAVTIAFCIFSGFPIRKVPSYITAQL) the chain is on the cytoplasmic side. The short motif at 119–121 (NPA) is the NPA 1 element. A helical membrane pass occupies residues 146–166 (LGAFAGAALLYIIIEPAIVQF). Topologically, residues 167-192 (DGGQRYILGEKSTAGIFGTYPPLYVG) are extracellular. A helical membrane pass occupies residues 193–213 (IGSAIASEIMGTAMLLLVIMV). Residues 214 to 226 (TGHPNNLPYKSAQ) lie on the Cytoplasmic side of the membrane. The helical transmembrane segment at 227–247 (GAMIALGITTISLCIGYTSGF) threads the bilayer. Residues 248 to 278 (SLNPARDFGPRLFTAIAGWGFDVFKVYHYYA) are Extracellular-facing. An NPA 2 motif is present at residues 250-252 (NPA). The helical transmembrane segment at 279 to 299 (LVPMFAPILGGLVGLMLMMPF) threads the bilayer. Residues 300–306 (SFLSVRA) are Cytoplasmic-facing.

This sequence belongs to the MIP/aquaporin (TC 1.A.8) family.

Its subcellular location is the cell membrane. It catalyses the reaction H2O(in) = H2O(out). Functionally, water channel required to facilitate the transport of water across membranes. Contributes to water uptake of spores during the early stages of spore germination. Aquaporins AQP1 and AQP2 act as extracellular pH sensors and enable the spores to hydrate under favorable conditions and to commence germination. Wounded vegetables and fruit present acidic pH, so the optimal pH range for germination is adapted to the relevant host pH. The sequence is that of Aquaporin-1 from Rhizopus delemar (strain RA 99-880 / ATCC MYA-4621 / FGSC 9543 / NRRL 43880) (Mucormycosis agent).